Here is a 138-residue protein sequence, read N- to C-terminus: Cofilin (138 aa).

Residues 2-136 form the ADF-H domain; the sequence is SSGVQPTQEC…TKDALFEKAT (135 aa).

Belongs to the actin-binding proteins ADF family.

Its subcellular location is the cytoplasm. The protein resides in the cytoskeleton. It localises to the nucleus matrix. Functionally, controls reversibly actin polymerization and depolymerization in a pH-sensitive manner. It has the ability to bind G- and F-actin in a 1:1 ratio of cofilin to actin. Binding to F-actin is regulated by tropomyosin. It is the major component of intranuclear and cytoplasmic actin rods. Required for accumulation of actin at the cell division site via depolymerizing actin at the cell ends. In association with myosin II has a role in the assembly of the contractile ring via severing actin filaments. Involved in the maintenance of the contractile ring once formed. In association with profilin and capping protein, has a role in the mitotic reorganization of the actin cytoskeleton. This Cryptococcus neoformans var. neoformans serotype D (strain B-3501A) (Filobasidiella neoformans) protein is Cofilin (COF1).